Reading from the N-terminus, the 204-residue chain is Endothelin-3 (204 aa).

The N-terminal stretch at 1-17 is a signal peptide; the sequence is MELRLWFLFGLTVTSAA. A disordered region spans residues 18–71; sequence GPVPRPQPGDAGRSGVPRAPSATKETMAMVATRGPSPRSSGQEQEPGPFGELAA. A propeptide spanning residues 18-80 is cleaved from the precursor; sequence GPVPRPQPGD…AKGGPVRYRA (63 aa). 2 cysteine pairs are disulfide-bonded: cysteine 83–cysteine 97 and cysteine 85–cysteine 93. A propeptide spanning residues 104-204 is cleaved from the precursor; sequence INTPERTVPY…KSRTDKARRL (101 aa). The interval 115–140 is disordered; the sequence is LSNHRGSVRGRRSAGPSPQSSQPSRG. Residues 127–140 show a composition bias toward low complexity; sequence SAGPSPQSSQPSRG. Residues 144-158 form an endothelin-like region; sequence CACAESQDRACVYFC. Residues 166–204 form a disordered region; the sequence is GASRTPETPDKEAGKPAGRATGGLHPRRLKSRTDKARRL.

It belongs to the endothelin/sarafotoxin family.

The protein resides in the secreted. Its function is as follows. Endothelins are endothelium-derived vasoconstrictor peptides. The polypeptide is Endothelin-3 (EDN3) (Sus scrofa (Pig)).